A 1898-amino-acid chain; its full sequence is Receptor-type tyrosine-protein phosphatase F (1898 aa).

An N-terminal signal peptide occupies residues 1 to 29 (MAPEPAPGRRMVPLVPALVMLGLMAGAHG). Residues 30 to 1254 (DSKPVFVKVP…QQQEEPEMLW (1225 aa)) lie on the Extracellular side of the membrane. Ig-like C2-type domains follow at residues 33-123 (PVFV…AKLS), 135-224 (PTID…ANLY), and 232-314 (PRFS…AQVT). Residues C54 and C107 are joined by a disulfide bond. 68–77 (KKGKKVSSQR) serves as a coordination point for heparin. N117 carries N-linked (GlcNAc...) asparagine glycosylation. A disulfide bridge connects residues C156 and C207. Residues N250 and N295 are each glycosylated (N-linked (GlcNAc...) asparagine). C253 and C298 are oxidised to a cystine. Fibronectin type-III domains lie at 321 to 411 (PPID…TGEQ), 416 to 510 (PPRR…TQQG), 514 to 604 (QPAD…TAQS), 609 to 706 (PPQK…TDED), 711 to 810 (PPRK…TTGA), 811 to 904 (VPGR…TPED), 909 to 1001 (FPQN…TMPV), and 1005 to 1089 (FAKN…TAPD). Positions 693–712 (GPESSPVLVRTDEDVPSGPP) are disordered. N-linked (GlcNAc...) asparagine glycosylation occurs at N721. N941, N957, and N960 each carry an N-linked (GlcNAc...) asparagine glycan. A helical transmembrane segment spans residues 1255–1275 (VTGPVLAVILIILIVIAILLF). Residues 1276 to 1898 (KRKRTHSPSS…YLGSFDHYAT (623 aa)) lie on the Cytoplasmic side of the membrane. Phosphoserine is present on S1296. 2 Tyrosine-protein phosphatase domains span residues 1343–1598 (FSQE…LLEA) and 1630–1889 (MELE…ALEY). Residues D1507, 1539–1545 (CSAGVGR), and Q1583 each bind substrate. C1539 (phosphocysteine intermediate) is an active-site residue. The active-site Phosphocysteine intermediate is C1830.

It belongs to the protein-tyrosine phosphatase family. Receptor class 2A subfamily. In terms of assembly, interacts with GRIP1. Interacts with PPFIA1, PPFIA2 and PPFIA3. Interacts with PTPRF. In terms of tissue distribution, expressed in the cell of the T lineage but not in cells of any other hemopoietic lineage.

Its subcellular location is the membrane. It catalyses the reaction O-phospho-L-tyrosyl-[protein] + H2O = L-tyrosyl-[protein] + phosphate. Functionally, possible cell adhesion receptor. It possesses an intrinsic protein tyrosine phosphatase activity (PTPase) and dephosphorylates EPHA2 regulating its activity. The polypeptide is Receptor-type tyrosine-protein phosphatase F (Ptprf) (Mus musculus (Mouse)).